The primary structure comprises 342 residues: Deoxyguanosinetriphosphate triphosphohydrolase-like protein (342 aa).

The region spanning arginine 75–valine 190 is the HD domain.

The protein belongs to the dGTPase family. Type 2 subfamily.

This Clostridium perfringens (strain SM101 / Type A) protein is Deoxyguanosinetriphosphate triphosphohydrolase-like protein.